A 503-amino-acid chain; its full sequence is Probable DNA double-strand break repair helicase HerA (503 aa).

Residues arginine 122, 131–136 (GGGKSN), and 478–479 (KI) contribute to the ATP site.

It belongs to the HerA family.

The catalysed reaction is Couples ATP hydrolysis with the unwinding of duplex DNA at the replication fork by translocating in the 5'-3' direction. This creates two antiparallel DNA single strands (ssDNA). The leading ssDNA polymer is the template for DNA polymerase III holoenzyme which synthesizes a continuous strand.. The enzyme catalyses ATP + H2O = ADP + phosphate + H(+). It catalyses the reaction Couples ATP hydrolysis with the unwinding of duplex DNA by translocating in the 3'-5' direction.. Its function is as follows. Involved in DNA double-strand break (DSB) repair. Probably acts with NurA to stimulate resection of the 5' strand and produce the long 3' single-strand that is required for RadA loading. Has DNA-dependent ATPase activity and DNA helicase activity. This is Probable DNA double-strand break repair helicase HerA from Methanocaldococcus jannaschii (strain ATCC 43067 / DSM 2661 / JAL-1 / JCM 10045 / NBRC 100440) (Methanococcus jannaschii).